Here is a 487-residue protein sequence, read N- to C-terminus: Acetylcholine receptor subunit beta-type acr-3 (487 aa).

The first 20 residues, 1–20 (MQKIWLFSIITIFLITELQC), serve as a signal peptide directing secretion. Topologically, residues 21–231 (YPNSAEERLL…KIRRKALFYT (211 aa)) are extracellular. A glycan (N-linked (GlcNAc...) asparagine) is linked at Asn46. A disulfide bridge connects residues Cys151 and Cys165. Transmembrane regions (helical) follow at residues 232-252 (VILI…FYLP), 259-279 (ITLA…VSKI), and 294-314 (LLMT…IINV). The Cytoplasmic segment spans residues 315–439 (YFRGPATHIM…WKFVSVVIDR (125 aa)). Residues 380–400 (ISEQPKQTSRKDGSSSEEKLS) form a disordered region. A helical transmembrane segment spans residues 440-460 (LLLYLFFAVTTGGTVGILLSA).

The protein belongs to the ligand-gated ion channel (TC 1.A.9) family. Acetylcholine receptor (TC 1.A.9.1) subfamily. As to quaternary structure, component of nicotinic acetylcholine receptor. In cholinergic motoneurons, composed of 2 non-alpha subunits acr-2 and acr-3, and 3 alpha subunits unc-38, unc-63 and acr-12.

It localises to the postsynaptic cell membrane. Its subcellular location is the cell membrane. Functionally, non-alpha subunit of nicotinic acetylcholine receptor (nAChR). Probably acts in cholinergic motoneurons to regulate presynaptic neurotransmitter release, thereby ensuring normal level of excitation of cholinergic motoneurons during locomotion. The chain is Acetylcholine receptor subunit beta-type acr-3 (acr-3) from Caenorhabditis elegans.